Reading from the N-terminus, the 394-residue chain is Elongation factor Tu (394 aa).

A tr-type G domain is found at 10 to 204 (KPHINIGTIG…AVDDNIPTPE (195 aa)). The G1 stretch occupies residues 19-26 (GHVDHGKT). 19–26 (GHVDHGKT) is a binding site for GTP. Mg(2+) is bound at residue Thr26. Residues 60–64 (GITIN) form a G2 region. The G3 stretch occupies residues 81-84 (DCPG). Residues 81-85 (DCPGH) and 136-139 (NKID) contribute to the GTP site. Residues 136 to 139 (NKID) are G4. A G5 region spans residues 174–176 (SAL).

The protein belongs to the TRAFAC class translation factor GTPase superfamily. Classic translation factor GTPase family. EF-Tu/EF-1A subfamily. As to quaternary structure, monomer.

It is found in the cytoplasm. The enzyme catalyses GTP + H2O = GDP + phosphate + H(+). GTP hydrolase that promotes the GTP-dependent binding of aminoacyl-tRNA to the A-site of ribosomes during protein biosynthesis. This is Elongation factor Tu from Chlamydia felis (strain Fe/C-56) (Chlamydophila felis).